Consider the following 159-residue polypeptide: Neuroglobin (159 aa).

A Globin domain is found at 3-151 (KLSEKDKGLI…VVSAMTRGWA (149 aa)). Heme b is bound by residues His-66 and His-98.

Belongs to the globin family. Monomer. Homodimers and homotetramers. Mainly monomeric but also detected as part of homodimers and homotetramers. Detected in brain, eye and gill, but not in muscle and blood (at protein level). Particularly high expression in the periventral zone of tectum opticum, with significant expression detected in white matter, preglomerular nucleus, posterior tubular nucleus, torus longitudinalis, hypothalamus, pituitary gland, posterior tuberculum, hypothalamus, synencephalon and formatio reticularis. Detected also in brain regions of the visual system, predominantly in parts of tectum opticum and torus semicircularis, area dorsalis telencephali and medulla oblongata. Strong expression observed in sensory epithelium of peripheral olfactory organ, and outer and inner nuclear layers and ganglion cell layer of retina.

It is found in the cytoplasm. It localises to the cytosol. Its subcellular location is the mitochondrion matrix. The catalysed reaction is Fe(III)-heme b-[protein] + nitric oxide + H2O = Fe(II)-heme b-[protein] + nitrite + 2 H(+). Functionally, monomeric globin with a bis-histidyl six-coordinate heme-iron atom through which it can bind dioxygen, carbon monoxide and nitric oxide. Could help transport oxygen and increase its availability to the metabolically active neuronal tissues, though its low quantity in tissues as well as its high affinity for dioxygen, which may limit its oxygen-releasing ability, argue against it. The ferrous/deoxygenated form exhibits a nitrite reductase activity and it could produce nitric oxide which in turn inhibits cellular respiration in response to hypoxia. In its ferrous/deoxygenated state, it may also exhibit GDI (Guanine nucleotide Dissociation Inhibitor) activity toward heterotrimeric G-alpha proteins, thereby regulating signal transduction to facilitate neuroprotective responses in the wake of hypoxia and associated oxidative stress. This Danio rerio (Zebrafish) protein is Neuroglobin (ngb).